Here is a 196-residue protein sequence, read N- to C-terminus: Aequorin-2 (196 aa).

Positions 1 to 7 are excised as a propeptide; the sequence is MTSKQYS. EF-hand domains lie at 18–53, 54–108, 117–146, and 147–182; these read RWIG…IVIN, NLGA…AKNE, DALF…AGII, and QSSE…FWYT. The Ca(2+) site is built by D31, N33, N35, K37, and E42. May interact with the chromophore stretches follow at residues 47 to 57, 62 to 72, and 107 to 117; these read ASDIVINNLGA, AKRHKDAVEAF, and NEPTLIRIWGD. Residues D124, D126, N128, E135, D160, D162, S164, Q166, and E171 each coordinate Ca(2+).

It belongs to the aequorin family. In terms of processing, the reduction of the disulfide bond is necessary to regenerate aequorin from apoaequorin.

Ca(2+)-dependent bioluminescence photoprotein. Displays an emission peak at 470 nm (blue light). Trace amounts of calcium ion trigger the intramolecular oxidation of the chromophore, coelenterazine into coelenteramide and CO(2) with the concomitant emission of light. This chain is Aequorin-2, found in Aequorea victoria (Water jellyfish).